We begin with the raw amino-acid sequence, 236 residues long: Large ribosomal subunit protein uL1 (236 aa).

Belongs to the universal ribosomal protein uL1 family. In terms of assembly, part of the 50S ribosomal subunit.

Its function is as follows. Binds directly to 23S rRNA. The L1 stalk is quite mobile in the ribosome, and is involved in E site tRNA release. Functionally, protein L1 is also a translational repressor protein, it controls the translation of the L11 operon by binding to its mRNA. The sequence is that of Large ribosomal subunit protein uL1 from Corynebacterium jeikeium (strain K411).